A 282-amino-acid polypeptide reads, in one-letter code: MAITAAMVKELRERTAAGMMDCKNALVEAEGDMELAIENMRKNGQAKAAKKAGNIAAEGAILIKTTDGLAALVEVNCQTDFVAKDDNFLGFANEVADAALASKVTIAELQAQFEEKRITLVTKIGENINIRRVEYVEGANLASYSHGATIGVVVAGEGDAESLKHIAMHVAASKPEFLTPDDVPADVVANEKRIQIEMAMNEGKPQEIAEKMVTGRMKKFTGEVSLTGQAFIMEPKKTVGVILTEKGITVSNFVRLEVGEGIEKKEEDFAAEVEAQIAAAKA.

Residues T79 to V82 are involved in Mg(2+) ion dislocation from EF-Tu.

Belongs to the EF-Ts family.

The protein localises to the cytoplasm. Functionally, associates with the EF-Tu.GDP complex and induces the exchange of GDP to GTP. It remains bound to the aminoacyl-tRNA.EF-Tu.GTP complex up to the GTP hydrolysis stage on the ribosome. The chain is Elongation factor Ts from Colwellia psychrerythraea (strain 34H / ATCC BAA-681) (Vibrio psychroerythus).